A 249-amino-acid polypeptide reads, in one-letter code: Serine 3-dehydrogenase (249 aa).

Residue 6–30 coordinates NADP(+); that stretch reads LITGATSGFGQATAQRFVKEGWKVI. A substrate-binding site is contributed by Ser135. Tyr148 functions as the Proton acceptor in the catalytic mechanism.

It belongs to the short-chain dehydrogenases/reductases (SDR) family. As to quaternary structure, homotetramer.

It carries out the reaction L-serine + NADP(+) = aminoacetaldehyde + CO2 + NADPH. Functionally, catalyzes the oxidation of the hydroxyl group of serine to form 2-aminomalonate semialdehyde which is spontaneously converted into 2-aminoacetaldehyde and CO(2). Also acts on D-serine, L-glycerate, D-glycerate and 2-methyl-DL-serine. Does not act on O-methyl-DL-serine and L-threonine. The chain is Serine 3-dehydrogenase (sdh) from Rhizobium radiobacter (Agrobacterium tumefaciens).